The sequence spans 200 residues: Thymidine kinase (200 aa).

ATP contacts are provided by residues 15-22 (GSMFSGKS) and 88-91 (DEVQ). E89 (proton acceptor) is an active-site residue. C145, C148, C183, and H186 together coordinate Zn(2+).

This sequence belongs to the thymidine kinase family. As to quaternary structure, homotetramer.

It localises to the cytoplasm. It catalyses the reaction thymidine + ATP = dTMP + ADP + H(+). The sequence is that of Thymidine kinase from Bacillus pumilus (strain SAFR-032).